A 185-amino-acid polypeptide reads, in one-letter code: HTH-type transcriptional regulator Hpr (185 aa).

Residues 13–157 (AMIFSQRIAQ…LIAILRNIYG (145 aa)) form the HTH marR-type domain. The H-T-H motif DNA-binding region spans 63–86 (ISEIAKFGVMHVSTAFNFSKKLEE).

As to quaternary structure, homodimer.

Its function is as follows. Negative regulator of protease production and sporulation. This is HTH-type transcriptional regulator Hpr from Bacillus anthracis (strain CDC 684 / NRRL 3495).